Consider the following 529-residue polypeptide: Bifunctional purine biosynthesis protein PurH (529 aa).

Residues 1–148 enclose the MGS-like domain; it reads MQQRRPVRRA…KNHKDVAIVV (148 aa). Lys-287 carries the post-translational modification N6-acetyllysine.

It belongs to the PurH family.

The catalysed reaction is (6R)-10-formyltetrahydrofolate + 5-amino-1-(5-phospho-beta-D-ribosyl)imidazole-4-carboxamide = 5-formamido-1-(5-phospho-D-ribosyl)imidazole-4-carboxamide + (6S)-5,6,7,8-tetrahydrofolate. The enzyme catalyses IMP + H2O = 5-formamido-1-(5-phospho-D-ribosyl)imidazole-4-carboxamide. The protein operates within purine metabolism; IMP biosynthesis via de novo pathway; 5-formamido-1-(5-phospho-D-ribosyl)imidazole-4-carboxamide from 5-amino-1-(5-phospho-D-ribosyl)imidazole-4-carboxamide (10-formyl THF route): step 1/1. Its pathway is purine metabolism; IMP biosynthesis via de novo pathway; IMP from 5-formamido-1-(5-phospho-D-ribosyl)imidazole-4-carboxamide: step 1/1. The polypeptide is Bifunctional purine biosynthesis protein PurH (Escherichia coli (strain SMS-3-5 / SECEC)).